Reading from the N-terminus, the 528-residue chain is Peptide chain release factor 3 (528 aa).

The tr-type G domain maps to 11–279; sequence SRRRTFAIIS…GLVDWAPSPQ (269 aa). Residues 20–27, 88–92, and 142–145 each bind GTP; these read SHPDAGKT, DTPGH, and NKLD.

This sequence belongs to the TRAFAC class translation factor GTPase superfamily. Classic translation factor GTPase family. PrfC subfamily.

Its subcellular location is the cytoplasm. Increases the formation of ribosomal termination complexes and stimulates activities of RF-1 and RF-2. It binds guanine nucleotides and has strong preference for UGA stop codons. It may interact directly with the ribosome. The stimulation of RF-1 and RF-2 is significantly reduced by GTP and GDP, but not by GMP. The polypeptide is Peptide chain release factor 3 (Pseudoalteromonas atlantica (strain T6c / ATCC BAA-1087)).